The primary structure comprises 454 residues: Cysteine--tRNA ligase (454 aa).

C27 contacts Zn(2+). The 'HIGH' region motif lies at 29 to 39 (PTVQDHFHIGH). 3 residues coordinate Zn(2+): D207, H232, and E236. The short motif at 265–269 (KMSKS) is the 'KMSKS' region element. K268 contributes to the ATP binding site.

This sequence belongs to the class-I aminoacyl-tRNA synthetase family. It depends on Zn(2+) as a cofactor.

The protein resides in the cytoplasm. The enzyme catalyses tRNA(Cys) + L-cysteine + ATP = L-cysteinyl-tRNA(Cys) + AMP + diphosphate. This chain is Cysteine--tRNA ligase, found in Thermoplasma volcanium (strain ATCC 51530 / DSM 4299 / JCM 9571 / NBRC 15438 / GSS1).